We begin with the raw amino-acid sequence, 771 residues long: MSGFLTSLDPRRVQWGAAWYAMHSRILRTKPVESMLEGTGATTAHGTKLAQVLTTMDLISLGVGSCVGTGMYVVSGLVAKEMAGPGVIVSFIIAAVASILSGVCYAEFGVRVPKTTGSAYTYSYVTVGEFVAFFIGWNLILEYLIGTAAGASALSSMFDSLANHTISRWMVDSVGTLNGLGKGEQSYPDLLALVIAIIVTIIVALGVKNSVGFNNVLNVLNLAVWVFIMIAGFFFINGKYWAEGQFLPYGWSGVLQGAATCFYAFIGFDIIATTGEEAKNPNTSIPYAITASLVICLTAYVSVSMILTLMVPYDTIDTESPLMEMFVARGFYAAKFVVAIGSVAGLTVSLLGSLFPMPRVIYAMAGDGLLFRFLAHVSSYTETPVVACIVSGFLAALLSLLVSLRDLIEMMSIGTLLAYTLVSVCVLLLRYQPESDIDGFVKFLSEEHTKKKEGILADCEKEVCSPVSEGEEFSGPATNTCGAKNLPSLGDNEMLIGKSDKSTYNVNHPNYGTVDMTTGIEADESENIYLIKLKKLIGPRYYTMRIQLGLPGKMDRPTAATGHTVTICVLLLFILMFVFCSFIIFGSDYISEQSWWAILLVVLMVLLISALVFVILQQPENPKKLPYMAPCLPFVPAFAMLVNIYLMLKLSTITWIRFAVWCFVGMLIYFGYGIWNSTLEISAREEALHQSTYQRYDVDDPFSVEEGFSYATEGESQENWGGPAEDKGFYYQQMSDTQPNTRTSSKAKSKSKHKQNSEALIANDELDYSPE.

6 helical membrane-spanning segments follow: residues 58–78 (LISLGVGSCVGTGMYVVSGLV), 83–103 (AGPGVIVSFIIAAVASILSGV), 130–150 (FVAFFIGWNLILEYLIGTAAG), 187–207 (YPDLLALVIAIIVTIIVALGV), 216–236 (VLNVLNLAVWVFIMIAGFFFI), and 251–271 (WSGVLQGAATCFYAFIGFDII). The N-linked (GlcNAc...) asparagine glycan is linked to N282. 5 helical membrane-spanning segments follow: residues 291 to 311 (ASLVICLTAYVSVSMILTLMV), 336 to 356 (FVVAIGSVAGLTVSLLGSLFP), 360 to 380 (VIYAMAGDGLLFRFLAHVSSY), 384 to 404 (PVVACIVSGFLAALLSLLVSL), and 407 to 427 (LIEMMSIGTLLAYTLVSVCVL). Phosphoserine occurs at positions 465, 468, and 488. Helical transmembrane passes span 565–585 (VTICVLLLFILMFVFCSFIIF), 596–616 (WAILLVVLMVLLISALVFVIL), 628–648 (MAPCLPFVPAFAMLVNIYLML), and 655–675 (WIRFAVWCFVGMLIYFGYGIW). The N-linked (GlcNAc...) asparagine glycan is linked to N676. Positions 712–771 (TEGESQENWGGPAEDKGFYYQQMSDTQPNTRTSSKAKSKSKHKQNSEALIANDELDYSPE) are disordered. Polar residues predominate over residues 732-743 (QQMSDTQPNTRT). Residues 745–754 (SKAKSKSKHK) are compositionally biased toward basic residues. Residues S757 and S769 each carry the phosphoserine modification.

Belongs to the amino acid-polyamine-organocation (APC) superfamily. Cationic amino acid transporter (CAT) (TC 2.A.3.3) family.

It is found in the lysosome membrane. It catalyses the reaction 4-aminobutanoate(in) = 4-aminobutanoate(out). In terms of biological role, imports 4-aminobutanoate (GABA) into lysosomes. May act as a GABA sensor that regulates mTORC2-dependent INS signaling and gluconeogenesis. The transport mechanism and substrate selectivity remain to be elucidated. The polypeptide is Solute carrier family 7 member 14 (Bos taurus (Bovine)).